Here is a 359-residue protein sequence, read N- to C-terminus: DNA polymerase IV (359 aa).

Residues 7–188 enclose the UmuC domain; it reads IIHIDMDAFY…LPIGKFFGVG (182 aa). Mg(2+)-binding residues include Asp11 and Asp106. Glu107 is an active-site residue.

The protein belongs to the DNA polymerase type-Y family. In terms of assembly, monomer. Mg(2+) is required as a cofactor.

It localises to the cytoplasm. It catalyses the reaction DNA(n) + a 2'-deoxyribonucleoside 5'-triphosphate = DNA(n+1) + diphosphate. Its function is as follows. Poorly processive, error-prone DNA polymerase involved in untargeted mutagenesis. Copies undamaged DNA at stalled replication forks, which arise in vivo from mismatched or misaligned primer ends. These misaligned primers can be extended by PolIV. Exhibits no 3'-5' exonuclease (proofreading) activity. May be involved in translesional synthesis, in conjunction with the beta clamp from PolIII. The chain is DNA polymerase IV from Clostridium perfringens (strain SM101 / Type A).